The sequence spans 454 residues: F-box/WD repeat-containing protein 2 (454 aa).

An F-box domain is found at 54–101 (RDFLKLLPLELSFYLLKWLDPQTLLTCCLVSKQWNKVISACTEVWQTA). WD repeat units lie at residues 139 to 175 (FETS…LWDV), 179 to 213 (QCVY…CWEW), 217 to 255 (ARTQ…VWAL), 259 to 306 (TCLN…IWPI), 313 to 352 (KCLK…QWDF), 364 to 403 (PEIA…RWPL), and 410 to 452 (KRGS…LWKE). The residue at position 298 (K298) is an N6-acetyllysine.

In terms of assembly, directly interacts with SKP1 and CUL1.

Its function is as follows. Substrate-recognition component of the SCF (SKP1-CUL1-F-box protein)-type E3 ubiquitin ligase complex. This is F-box/WD repeat-containing protein 2 (FBXW2) from Homo sapiens (Human).